Here is a 227-residue protein sequence, read N- to C-terminus: Type II restriction enzyme ScaI (227 aa).

The interval 12-35 (EARVGTRTGGPAMRPKTSDSPYFG) is disordered.

It carries out the reaction Endonucleolytic cleavage of DNA to give specific double-stranded fragments with terminal 5'-phosphates.. Its function is as follows. A P subtype restriction enzyme that recognizes the double-stranded sequence 5'-AGTACT-3' and cleaves after T-3. This Streptomyces caespitosus protein is Type II restriction enzyme ScaI.